Here is a 158-residue protein sequence, read N- to C-terminus: Ribonuclease H (158 aa).

One can recognise an RNase H type-1 domain in the interval 1-142; that stretch reads MRKQVEIFTD…CDELARAAAM (142 aa). The Mg(2+) site is built by D10, E48, D70, and D134.

This sequence belongs to the RNase H family. In terms of assembly, monomer. The cofactor is Mg(2+).

The protein localises to the cytoplasm. It catalyses the reaction Endonucleolytic cleavage to 5'-phosphomonoester.. Functionally, endonuclease that specifically degrades the RNA of RNA-DNA hybrids. This chain is Ribonuclease H, found in Cronobacter sakazakii (strain ATCC BAA-894) (Enterobacter sakazakii).